The primary structure comprises 80 residues: Protein UL148A (80 aa).

A helical membrane pass occupies residues 10–30 (WIPVCVVVVMTSVVLFAGLHV).

The protein localises to the host membrane. Functionally, plays a role in the down-regulation of the host NKG2D ligand MICA by utilizing the lysosomal pathway for its degradation. In turn, MICA reduction diminishes NK-cell killing of HCMV-infected cells. This is Protein UL148A (UL148A) from Human cytomegalovirus (strain Merlin) (HHV-5).